The following is a 213-amino-acid chain: Small ribosomal subunit protein uS5 (213 aa).

A disordered region spans residues 1-41 (MSGRERNGGRSAENNDKKERNERNGRNDRGGRNDRRNQQDE). Residues 45-108 (FIERVVTINR…EEARKNFFRV (64 aa)) form the S5 DRBM domain.

It belongs to the universal ribosomal protein uS5 family. Part of the 30S ribosomal subunit. Contacts proteins S4 and S8.

In terms of biological role, with S4 and S12 plays an important role in translational accuracy. Its function is as follows. Located at the back of the 30S subunit body where it stabilizes the conformation of the head with respect to the body. This chain is Small ribosomal subunit protein uS5, found in Corynebacterium jeikeium (strain K411).